Consider the following 191-residue polypeptide: Neuronal calcium sensor 1 (191 aa).

A lipid anchor (N-myristoyl glycine) is attached at Gly2. 4 consecutive EF-hand domains span residues 24 to 59 (EAEI…FPFG), 60 to 95 (DPSK…TSRG), 96 to 131 (TVEE…IYRM), and 144 to 179 (TPEK…DPTI). Residues Asp73, Asn75, Asp77, Glu84, Asp109, Asp111, Asp113, Glu120, Asp157, Asn159, Asp161, Lys163, and Glu168 each contribute to the Ca(2+) site.

The protein belongs to the recoverin family.

Functionally, neuronal calcium sensor, regulator of G protein-coupled receptor phosphorylation in a calcium dependent manner. Regulates neurite extension and branching by activity-dependent (Ca2+) influx in growth cones. The protein is Neuronal calcium sensor 1 of Aplysia californica (California sea hare).